Reading from the N-terminus, the 363-residue chain is UDP-N-acetylglucosamine--N-acetylmuramyl-(pentapeptide) pyrophosphoryl-undecaprenol N-acetylglucosamine transferase (363 aa).

UDP-N-acetyl-alpha-D-glucosamine-binding positions include 14–16, N122, R163, S190, and Q285; that span reads TGG.

It belongs to the glycosyltransferase 28 family. MurG subfamily.

Its subcellular location is the cell inner membrane. The catalysed reaction is di-trans,octa-cis-undecaprenyl diphospho-N-acetyl-alpha-D-muramoyl-L-alanyl-D-glutamyl-meso-2,6-diaminopimeloyl-D-alanyl-D-alanine + UDP-N-acetyl-alpha-D-glucosamine = di-trans,octa-cis-undecaprenyl diphospho-[N-acetyl-alpha-D-glucosaminyl-(1-&gt;4)]-N-acetyl-alpha-D-muramoyl-L-alanyl-D-glutamyl-meso-2,6-diaminopimeloyl-D-alanyl-D-alanine + UDP + H(+). The protein operates within cell wall biogenesis; peptidoglycan biosynthesis. Functionally, cell wall formation. Catalyzes the transfer of a GlcNAc subunit on undecaprenyl-pyrophosphoryl-MurNAc-pentapeptide (lipid intermediate I) to form undecaprenyl-pyrophosphoryl-MurNAc-(pentapeptide)GlcNAc (lipid intermediate II). The chain is UDP-N-acetylglucosamine--N-acetylmuramyl-(pentapeptide) pyrophosphoryl-undecaprenol N-acetylglucosamine transferase from Prochlorococcus marinus (strain MIT 9301).